The sequence spans 67 residues: Large ribosomal subunit protein bL35 (67 aa).

Belongs to the bacterial ribosomal protein bL35 family.

The polypeptide is Large ribosomal subunit protein bL35 (Acidovorax ebreus (strain TPSY) (Diaphorobacter sp. (strain TPSY))).